The chain runs to 143 residues: Transcriptional regulator MraZ (143 aa).

SpoVT-AbrB domains follow at residues 5–47 (TYAP…SQRE) and 76–119 (ASAE…DAEA).

Belongs to the MraZ family. Forms oligomers.

It localises to the cytoplasm. It is found in the nucleoid. This Leifsonia xyli subsp. xyli (strain CTCB07) protein is Transcriptional regulator MraZ.